We begin with the raw amino-acid sequence, 196 residues long: CAG pathogenicity island protein 13 (196 aa).

This Helicobacter pylori (strain ATCC 700392 / 26695) (Campylobacter pylori) protein is CAG pathogenicity island protein 13 (cagS).